Reading from the N-terminus, the 305-residue chain is NADH-cytochrome b5 reductase 1 (305 aa).

The chain crosses the membrane as a helical span at residues 8–28; it reads VLLASLGVGLLTLLGVALGAY. The FAD-binding FR-type domain occupies 44–156; that stretch reads NEKYQLRLLD…RGPSGLLTYA (113 aa). Residues 136 to 166 and 175 to 210 contribute to the FAD site; these read DSLK…IQPN and VARN…QCFL.

This sequence belongs to the flavoprotein pyridine nucleotide cytochrome reductase family. Requires FAD as cofactor.

It localises to the membrane. It carries out the reaction 2 Fe(III)-[cytochrome b5] + NADH = 2 Fe(II)-[cytochrome b5] + NAD(+) + H(+). In terms of biological role, NADH-cytochrome b5 reductases are involved in desaturation and elongation of fatty acids, cholesterol biosynthesis, drug metabolism, and, in erythrocyte, methemoglobin reduction. The sequence is that of NADH-cytochrome b5 reductase 1 (CYB5R1) from Bos taurus (Bovine).